The following is a 434-amino-acid chain: Probable carboxypeptidase BDBG_01803 (434 aa).

Residues 1–20 (MKLSHLAAALSAQLVAPVAA) form the signal peptide. Residues asparagine 35, asparagine 136, and asparagine 150 are each glycosylated (N-linked (GlcNAc...) asparagine). Aspartate 160 is a Zn(2+) binding site. Glutamate 192 serves as the catalytic Proton acceptor. Glutamate 193 is a Zn(2+) binding site. A glycan (N-linked (GlcNAc...) asparagine) is linked at asparagine 343.

Belongs to the peptidase M20A family. Requires Zn(2+) as cofactor.

It localises to the secreted. This chain is Probable carboxypeptidase BDBG_01803, found in Blastomyces gilchristii (strain SLH14081) (Blastomyces dermatitidis).